The following is a 461-amino-acid chain: Homocitrate synthase (461 aa).

The 256-residue stretch at 4-259 (VGILDSTLRE…IEVVKLDKLQ (256 aa)) folds into the Pyruvate carboxyltransferase domain. Arg12 is a 2-oxoglutarate binding site. Residue Glu13 participates in Mg(2+) binding. 2-oxoglutarate-binding residues include His76, Arg136, and Thr170. The Mg(2+) site is built by His198 and His200. His292 (proton acceptor) is an active-site residue.

Belongs to the alpha-IPM synthase/homocitrate synthase family. Homocitrate synthase LYS20/LYS21 subfamily. It depends on Mg(2+) as a cofactor. Requires Mn(2+) as cofactor.

The catalysed reaction is acetyl-CoA + 2-oxoglutarate + H2O = (2R)-homocitrate + CoA + H(+). The protein operates within amino-acid biosynthesis; L-lysine biosynthesis via AAA pathway; L-alpha-aminoadipate from 2-oxoglutarate: step 1/5. Its function is as follows. Catalyzes the aldol-type condensation of 2-oxoglutarate with acetyl-CoA to yield homocitrate. Carries out the first step of the alpha-aminoadipate (AAA) lysine biosynthesis pathway. The sequence is that of Homocitrate synthase from Saccharolobus solfataricus (strain ATCC 35092 / DSM 1617 / JCM 11322 / P2) (Sulfolobus solfataricus).